The primary structure comprises 65 residues: Large ribosomal subunit protein bL33c (65 aa).

It belongs to the bacterial ribosomal protein bL33 family.

The protein resides in the plastid. Its subcellular location is the chloroplast. The protein is Large ribosomal subunit protein bL33c of Pyropia yezoensis (Susabi-nori).